The primary structure comprises 303 residues: Protoheme IX farnesyltransferase (303 aa).

Transmembrane regions (helical) follow at residues Gly17–Ala37, Leu42–Ile62, Ala91–Val111, Leu114–Leu134, Ile142–Gly162, Ala168–Ile188, Ile208–Leu228, Leu231–Leu251, and Phe270–Leu290.

The protein belongs to the UbiA prenyltransferase family. Protoheme IX farnesyltransferase subfamily.

Its subcellular location is the cell inner membrane. It catalyses the reaction heme b + (2E,6E)-farnesyl diphosphate + H2O = Fe(II)-heme o + diphosphate. It functions in the pathway porphyrin-containing compound metabolism; heme O biosynthesis; heme O from protoheme: step 1/1. Functionally, converts heme B (protoheme IX) to heme O by substitution of the vinyl group on carbon 2 of heme B porphyrin ring with a hydroxyethyl farnesyl side group. This chain is Protoheme IX farnesyltransferase, found in Alcanivorax borkumensis (strain ATCC 700651 / DSM 11573 / NCIMB 13689 / SK2).